The chain runs to 456 residues: tRNA-2-methylthio-N(6)-dimethylallyladenosine synthase (456 aa).

An MTTase N-terminal domain is found at 3 to 120 (KKVYVKTFGC…LPQMIDQRRA (118 aa)). Residues cysteine 12, cysteine 49, cysteine 83, cysteine 157, cysteine 161, and cysteine 164 each contribute to the [4Fe-4S] cluster site. A Radical SAM core domain is found at 143-377 (RIDGPSAFVS…QATIEENVQR (235 aa)). The TRAM domain maps to 380–447 (QAMVGKVERI…PHSLRGELVM (68 aa)).

Belongs to the methylthiotransferase family. MiaB subfamily. In terms of assembly, monomer. It depends on [4Fe-4S] cluster as a cofactor.

The protein resides in the cytoplasm. The catalysed reaction is N(6)-dimethylallyladenosine(37) in tRNA + (sulfur carrier)-SH + AH2 + 2 S-adenosyl-L-methionine = 2-methylsulfanyl-N(6)-dimethylallyladenosine(37) in tRNA + (sulfur carrier)-H + 5'-deoxyadenosine + L-methionine + A + S-adenosyl-L-homocysteine + 2 H(+). Catalyzes the methylthiolation of N6-(dimethylallyl)adenosine (i(6)A), leading to the formation of 2-methylthio-N6-(dimethylallyl)adenosine (ms(2)i(6)A) at position 37 in tRNAs that read codons beginning with uridine. The chain is tRNA-2-methylthio-N(6)-dimethylallyladenosine synthase from Paraburkholderia phymatum (strain DSM 17167 / CIP 108236 / LMG 21445 / STM815) (Burkholderia phymatum).